Consider the following 529-residue polypeptide: Na(+)/H(+) antiporter NhaB (529 aa).

The next 12 membrane-spanning stretches (helical) occupy residues Phe-13–Pro-33, Ile-34–Phe-54, Leu-90–Met-110, Leu-113–Leu-133, Leu-149–Tyr-166, Leu-205–Pro-225, Phe-241–Phe-261, Gly-306–Ile-326, Gly-327–Gly-347, Glu-351–Ile-371, Ala-451–Ile-471, and Val-479–Phe-499.

It belongs to the NhaB Na(+)/H(+) (TC 2.A.34) antiporter family.

It localises to the cell inner membrane. It catalyses the reaction 2 Na(+)(in) + 3 H(+)(out) = 2 Na(+)(out) + 3 H(+)(in). Functionally, na(+)/H(+) antiporter that extrudes sodium in exchange for external protons. The sequence is that of Na(+)/H(+) antiporter NhaB from Vibrio vulnificus (strain YJ016).